We begin with the raw amino-acid sequence, 556 residues long: Adenine deaminase (556 aa).

Belongs to the metallo-dependent hydrolases superfamily. Adenine deaminase family. Mn(2+) serves as cofactor.

It catalyses the reaction adenine + H2O + H(+) = hypoxanthine + NH4(+). The protein is Adenine deaminase of Methanocaldococcus jannaschii (strain ATCC 43067 / DSM 2661 / JAL-1 / JCM 10045 / NBRC 100440) (Methanococcus jannaschii).